The chain runs to 565 residues: MILYNIFLVKMKVDFINTVFPSSTKEYIPGTIYNNIKVGMRKIHFNDNTESILVYDTGGLHTDQNVEVDINHGITKLRLNWIIDRQDVEYYERQPVLNSEHIFTSQSNKVLRANSTKPVTQIFYARNNIITPEMEYIAIRENSLRQKILSYKPTVMSPEITPEFVRQEVASGRAIIPANINHPESEPMIIGKNFLVKINANIGNSVVSSNIEEEVQKMIHAITYGADTVMDLSTGNNIHDIREWIIRNSPVPIGTVPIYQALNKVNGVVGDLNFNVFKETLIEQAEQGVDYFTIHAGVLKNYISHTDNRLTGIVSRGGAIMAHWCTIHNKENFLYTNFEEICDIMKRYDIAFSLGDGLRPGSIADANDTAQFLELKTLGELTDIAWQHDCQAMIEGPGHVPMHLIKENMEKQIHFCKEAPFYTLGPLTTDIAPGYDHITSAIGAAITGWYGTSMLCYVTPKEHLGLPNIQDVKDGVIAYKIAAHAADLAKGNPSAYIRDYALSYARFNFKWHDQFNLSLDPETARSLHDESLPSEHAKSAHFCSMCGPKFCSMKLTHHLKEHSTG.

Residues Asn-201, Met-230, Tyr-259, His-295, 315–317, 356–359, and Glu-395 each bind substrate; these read SRG and DGLR. Zn(2+) is bound at residue His-399. Tyr-422 contributes to the substrate binding site. Residue His-463 coordinates Zn(2+). [4Fe-4S] cluster is bound by residues Cys-543, Cys-546, and Cys-551.

This sequence belongs to the ThiC family. In terms of assembly, homodimer. [4Fe-4S] cluster serves as cofactor.

The catalysed reaction is 5-amino-1-(5-phospho-beta-D-ribosyl)imidazole + S-adenosyl-L-methionine = 4-amino-2-methyl-5-(phosphooxymethyl)pyrimidine + CO + 5'-deoxyadenosine + formate + L-methionine + 3 H(+). It functions in the pathway cofactor biosynthesis; thiamine diphosphate biosynthesis. Catalyzes the synthesis of the hydroxymethylpyrimidine phosphate (HMP-P) moiety of thiamine from aminoimidazole ribotide (AIR) in a radical S-adenosyl-L-methionine (SAM)-dependent reaction. The polypeptide is Phosphomethylpyrimidine synthase (Ehrlichia canis (strain Jake)).